We begin with the raw amino-acid sequence, 546 residues long: CTP synthase (546 aa).

Residues 1-266 form an amidoligase domain region; sequence MTTRYIFVTG…DDLVVKRFGL (266 aa). S14 provides a ligand contact to CTP. S14 serves as a coordination point for UTP. Residues 15–20 and D72 contribute to the ATP site; that span reads SLGKGI. D72 and E140 together coordinate Mg(2+). Residues 147 to 149, 187 to 192, and K223 each bind CTP; these read DIE and KTKPTQ. Residues 187–192 and K223 contribute to the UTP site; that span reads KTKPTQ. An ATP-binding site is contributed by 239-241; sequence KDV. Positions 291–542 constitute a Glutamine amidotransferase type-1 domain; the sequence is VIGMVGKYIE…VAAASAHQKR (252 aa). L-glutamine is bound at residue G352. The active-site Nucleophile; for glutamine hydrolysis is C379. Residues 380 to 383, E403, and R470 contribute to the L-glutamine site; that span reads LGMQ. Active-site residues include H515 and E517.

Belongs to the CTP synthase family. Homotetramer.

It catalyses the reaction UTP + L-glutamine + ATP + H2O = CTP + L-glutamate + ADP + phosphate + 2 H(+). It carries out the reaction L-glutamine + H2O = L-glutamate + NH4(+). The catalysed reaction is UTP + NH4(+) + ATP = CTP + ADP + phosphate + 2 H(+). It functions in the pathway pyrimidine metabolism; CTP biosynthesis via de novo pathway; CTP from UDP: step 2/2. Allosterically activated by GTP, when glutamine is the substrate; GTP has no effect on the reaction when ammonia is the substrate. The allosteric effector GTP functions by stabilizing the protein conformation that binds the tetrahedral intermediate(s) formed during glutamine hydrolysis. Inhibited by the product CTP, via allosteric rather than competitive inhibition. Its function is as follows. Catalyzes the ATP-dependent amination of UTP to CTP with either L-glutamine or ammonia as the source of nitrogen. Regulates intracellular CTP levels through interactions with the four ribonucleotide triphosphates. In Shewanella sp. (strain MR-7), this protein is CTP synthase.